Reading from the N-terminus, the 449-residue chain is Maltoporin (449 aa).

The N-terminal stretch at 1–24 (MITLRKLPLAVAVAAGVMSAQAMA) is a signal peptide.

The protein belongs to the porin LamB (TC 1.B.3) family. Homotrimer formed of three 18-stranded antiparallel beta-barrels, containing three independent channels.

The protein resides in the cell outer membrane. The enzyme catalyses beta-maltose(in) = beta-maltose(out). In terms of biological role, involved in the transport of maltose and maltodextrins. The polypeptide is Maltoporin (Citrobacter koseri (strain ATCC BAA-895 / CDC 4225-83 / SGSC4696)).